A 415-amino-acid polypeptide reads, in one-letter code: Small RNA 2'-O-methyltransferase (415 aa).

S-adenosyl-L-methionine is bound by residues Ser99 and Asp117. The Mg(2+) site is built by Glu169, Glu172, and His173.

Belongs to the methyltransferase superfamily. HEN1 family. Mg(2+) serves as cofactor.

The protein resides in the cytoplasm. The catalysed reaction is small RNA 3'-end nucleotide + S-adenosyl-L-methionine = small RNA 3'-end 2'-O-methylnucleotide + S-adenosyl-L-homocysteine + H(+). Functionally, methyltransferase that adds a 2'-O-methyl group at the 3'-end of piRNAs, a class of 24 to 30 nucleotide RNAs that are generated by a Dicer-independent mechanism and are primarily derived from transposons and other repeated sequence elements. This probably protects the 3'-end of piRNAs from uridylation activity and subsequent degradation. Stabilization of piRNAs is essential for gametogenesis. The sequence is that of Small RNA 2'-O-methyltransferase from Bombyx mori (Silk moth).